Reading from the N-terminus, the 344-residue chain is tRNA N6-adenosine threonylcarbamoyltransferase (344 aa).

Residues H112 and H116 each coordinate Fe cation. Residues 135 to 139 (LVSGG), D168, G181, and N271 contribute to the substrate site. D299 is a Fe cation binding site.

Belongs to the KAE1 / TsaD family. The cofactor is Fe(2+).

It localises to the cytoplasm. The catalysed reaction is L-threonylcarbamoyladenylate + adenosine(37) in tRNA = N(6)-L-threonylcarbamoyladenosine(37) in tRNA + AMP + H(+). Its function is as follows. Required for the formation of a threonylcarbamoyl group on adenosine at position 37 (t(6)A37) in tRNAs that read codons beginning with adenine. Is involved in the transfer of the threonylcarbamoyl moiety of threonylcarbamoyl-AMP (TC-AMP) to the N6 group of A37, together with TsaE and TsaB. TsaD likely plays a direct catalytic role in this reaction. The chain is tRNA N6-adenosine threonylcarbamoyltransferase from Sphingopyxis alaskensis (strain DSM 13593 / LMG 18877 / RB2256) (Sphingomonas alaskensis).